Here is an 81-residue protein sequence, read N- to C-terminus: Exodeoxyribonuclease 7 small subunit (81 aa).

The protein belongs to the XseB family. Heterooligomer composed of large and small subunits.

Its subcellular location is the cytoplasm. It catalyses the reaction Exonucleolytic cleavage in either 5'- to 3'- or 3'- to 5'-direction to yield nucleoside 5'-phosphates.. Functionally, bidirectionally degrades single-stranded DNA into large acid-insoluble oligonucleotides, which are then degraded further into small acid-soluble oligonucleotides. This chain is Exodeoxyribonuclease 7 small subunit, found in Ruegeria sp. (strain TM1040) (Silicibacter sp.).